The primary structure comprises 760 residues: U-box domain-containing protein 3 (760 aa).

Residues 146 to 217 (LMELMENALR…EQTEQLIELV (72 aa)) are a coiled coil. In terms of domain architecture, U-box spans 237–311 (SIPPYFRCPL…ASWLEANRIN (75 aa)). Residues 424 to 434 (ILGNHQSSSEM) show a composition bias toward polar residues. The interval 424-448 (ILGNHQSSSEMSPKKNLESSNNVNH) is disordered. ARM repeat units follow at residues 504–543 (IENRVHIGRCGAITPLLSLLYSEEKLTQEHAVTALLNLSI), 545–584 (ELNKAMIVEVGAIEPLVHVLNTGNDRAKENSAASLFSLSV), 586–626 (QVNR…NLSI), 628–666 (HDNKARIVQAKAVKYLVELLDPDLEMVDKAVALLANLSA), and 668–707 (GEGRQAIVREGGIPLLVETVDLGSQRGKENAASVLLQLCL).

The catalysed reaction is S-ubiquitinyl-[E2 ubiquitin-conjugating enzyme]-L-cysteine + [acceptor protein]-L-lysine = [E2 ubiquitin-conjugating enzyme]-L-cysteine + N(6)-ubiquitinyl-[acceptor protein]-L-lysine.. The protein operates within protein modification; protein ubiquitination. Functionally, functions as an E3 ubiquitin ligase. In Arabidopsis thaliana (Mouse-ear cress), this protein is U-box domain-containing protein 3 (PUB3).